Consider the following 282-residue polypeptide: UDP-3-O-acyl-N-acetylglucosamine deacetylase (282 aa).

Zn(2+) contacts are provided by His81, His239, and Asp243. Catalysis depends on His266, which acts as the Proton donor.

The protein belongs to the LpxC family. It depends on Zn(2+) as a cofactor.

The catalysed reaction is a UDP-3-O-[(3R)-3-hydroxyacyl]-N-acetyl-alpha-D-glucosamine + H2O = a UDP-3-O-[(3R)-3-hydroxyacyl]-alpha-D-glucosamine + acetate. It participates in glycolipid biosynthesis; lipid IV(A) biosynthesis; lipid IV(A) from (3R)-3-hydroxytetradecanoyl-[acyl-carrier-protein] and UDP-N-acetyl-alpha-D-glucosamine: step 2/6. Functionally, catalyzes the hydrolysis of UDP-3-O-myristoyl-N-acetylglucosamine to form UDP-3-O-myristoylglucosamine and acetate, the committed step in lipid A biosynthesis. The chain is UDP-3-O-acyl-N-acetylglucosamine deacetylase from Chlamydia pneumoniae (Chlamydophila pneumoniae).